The chain runs to 272 residues: Shikimate dehydrogenase (NADP(+)) (272 aa).

Residues Ser-14 to Ser-16 and Thr-61 each bind shikimate. Residue Lys-65 is the Proton acceptor of the active site. NADP(+) is bound at residue Glu-77. Shikimate contacts are provided by Asn-86 and Asp-102. NADP(+) is bound by residues Gly-126–Ala-130, Asn-149–Arg-154, and Met-213. Tyr-215 is a shikimate binding site. NADP(+) is bound at residue Gly-237.

This sequence belongs to the shikimate dehydrogenase family. Homodimer.

It catalyses the reaction shikimate + NADP(+) = 3-dehydroshikimate + NADPH + H(+). Its pathway is metabolic intermediate biosynthesis; chorismate biosynthesis; chorismate from D-erythrose 4-phosphate and phosphoenolpyruvate: step 4/7. In terms of biological role, involved in the biosynthesis of the chorismate, which leads to the biosynthesis of aromatic amino acids. Catalyzes the reversible NADPH linked reduction of 3-dehydroshikimate (DHSA) to yield shikimate (SA). In Shigella boydii serotype 18 (strain CDC 3083-94 / BS512), this protein is Shikimate dehydrogenase (NADP(+)).